The chain runs to 162 residues: Small ribosomal subunit protein uS9 (162 aa).

It belongs to the universal ribosomal protein uS9 family.

The chain is Small ribosomal subunit protein uS9 from Methylobacterium sp. (strain 4-46).